We begin with the raw amino-acid sequence, 831 residues long: Zinc transporter ZIP10 (831 aa).

The N-terminal stretch at M1–C25 is a signal peptide. The disordered stretch occupies residues H126–N318. Positions E138–T147 are enriched in polar residues. An N-linked (GlcNAc...) asparagine glycan is attached at N139. Residues K152–M171 show a composition bias toward basic and acidic residues. The span at H172 to L188 shows a compositional bias: basic residues. Residues D189–N198 show a composition bias toward basic and acidic residues. N-linked (GlcNAc...) asparagine glycosylation is found at N198 and N218. A compositionally biased stretch (polar residues) spans N211–Q221. Residues P229–R238 are compositionally biased toward basic residues. 2 stretches are compositionally biased toward basic and acidic residues: residues D256–H273 and H281–H315. N339 carries N-linked (GlcNAc...) asparagine glycosylation. The next 2 helical transmembrane spans lie at I411–I431 and F438–H458. A disordered region spans residues Q464–E484. A helical transmembrane segment spans residues V495 to I515. Residues T536 and T553 each carry the phosphothreonine modification. At S591 the chain carries Phosphoserine. The next 4 membrane-spanning stretches (helical) occupy residues A687 to F707, I732 to V752, I759 to M779, and F801 to Y821.

Belongs to the ZIP transporter (TC 2.A.5) family. As to quaternary structure, interacts with SLC39A6; which triggers cells to undergo EMT and mitosis. Found in a complex with SLC39A6, SLC39A10 and with the 'Ser-727' phosphorylated form of STAT3 throughout mitosis. Found in a complex with SLC39A6, SLC39A10 and with NCAM1; this complex controls NCAM1 phosphorylation and integration into focal adhesion complexes during epithelial-tomesenchymal transition. Found in a complex with SLC39A6, SLC39A10 and with GSK3B that controls NCAM1 phosphorylation. Post-translationally, undergoes N-terminal ectodomain shedding.

It is found in the cell membrane. Its subcellular location is the apical cell membrane. The enzyme catalyses Zn(2+)(in) = Zn(2+)(out). Its function is as follows. Zinc-influx transporter. When associated with SLC39A6, the heterodimer formed by SLC39A10 and SLC39A6 mediates cellular zinc uptake to trigger cells to undergo epithelial-to-mesenchymal transition (EMT). SLC39A10-SLC39A6 heterodimers play also an essentiel role in initiating mitosis by importing zinc into cells to initiate a pathway resulting in the onset of mitosis. Plays an important for both mature B-cell maintenance and humoral immune responses. When associated with SLC39A10, the heterodimer controls NCAM1 phosphorylation and integration into focal adhesion complexes during EMT. This chain is Zinc transporter ZIP10, found in Homo sapiens (Human).